The chain runs to 257 residues: Deoxyribose-phosphate aldolase (257 aa).

D102 (proton donor/acceptor) is an active-site residue. K166 functions as the Schiff-base intermediate with acetaldehyde in the catalytic mechanism. K198 acts as the Proton donor/acceptor in catalysis.

This sequence belongs to the DeoC/FbaB aldolase family. DeoC type 2 subfamily.

Its subcellular location is the cytoplasm. The catalysed reaction is 2-deoxy-D-ribose 5-phosphate = D-glyceraldehyde 3-phosphate + acetaldehyde. The protein operates within carbohydrate degradation; 2-deoxy-D-ribose 1-phosphate degradation; D-glyceraldehyde 3-phosphate and acetaldehyde from 2-deoxy-alpha-D-ribose 1-phosphate: step 2/2. Functionally, catalyzes a reversible aldol reaction between acetaldehyde and D-glyceraldehyde 3-phosphate to generate 2-deoxy-D-ribose 5-phosphate. This Shewanella frigidimarina (strain NCIMB 400) protein is Deoxyribose-phosphate aldolase.